The chain runs to 752 residues: Double zinc ribbon and ankyrin repeat-containing protein 1 (752 aa).

2 DZANK-type zinc fingers span residues 210–270 (CPKC…VVCE) and 338–386 (CSKC…GGCG). Residues 448 to 469 (KKRSQQREAELSRQEQMRDRKP) are compositionally biased toward basic and acidic residues. Disordered regions lie at residues 448–471 (KKRS…KPLL) and 536–614 (PPEE…VGPE). The segment covering 536 to 554 (PPEESRSSSAGQRSRSVTS) has biased composition (low complexity). A compositionally biased stretch (polar residues) spans 555-580 (ESQNLSSVTEGRNSASPENNINTTGS). The span at 600–614 (PESKDSLLLKEVGPE) shows a compositional bias: basic and acidic residues. ANK repeat units lie at residues 638–667 (DGRP…DVNQ), 672–703 (LKNT…SIRK), and 707–737 (RGQT…GLLL).

It localises to the cytoplasm. Its subcellular location is the cytoskeleton. It is found in the microtubule organizing center. The protein localises to the centrosome. The protein resides in the cilium basal body. Its function is as follows. Required for the intracellular transport of organelles and vesicles, and is essential for the photoreceptor's outer segments formation, maintenance and function. This chain is Double zinc ribbon and ankyrin repeat-containing protein 1 (dzank1), found in Danio rerio (Zebrafish).